The following is a 271-amino-acid chain: Troponin T, fast skeletal muscle (271 aa).

The segment covering Met1–Glu21 has biased composition (acidic residues). The interval Met1–Lys74 is disordered. Position 2 is an N-acetylserine (Ser2). A Phosphoserine modification is found at Ser2. 2 stretches are compositionally biased toward basic and acidic residues: residues Pro31 to Arg53 and Pro62 to Lys74. Ser90 bears the Phosphoserine mark. Positions Arg113 to Lys155 are enriched in basic and acidic residues. Residues Arg113 to Glu194 form a disordered region. Residues Ser161, Ser168, and Ser169 each carry the phosphoserine modification. Basic and acidic residues predominate over residues Thr183–Glu194. Ser205 carries the post-translational modification Phosphoserine. Tyr221 carries the phosphotyrosine modification. The disordered stretch occupies residues Ile248–Lys271.

It belongs to the troponin T family.

Functionally, troponin T is the tropomyosin-binding subunit of troponin, the thin filament regulatory complex which confers calcium-sensitivity to striated muscle actomyosin ATPase activity. The sequence is that of Troponin T, fast skeletal muscle (Tnnt3) from Bos taurus (Bovine).